Here is a 278-residue protein sequence, read N- to C-terminus: 2-dehydro-3-deoxyphosphooctonate aldolase (278 aa).

Belongs to the KdsA family.

The protein localises to the cytoplasm. It carries out the reaction D-arabinose 5-phosphate + phosphoenolpyruvate + H2O = 3-deoxy-alpha-D-manno-2-octulosonate-8-phosphate + phosphate. It participates in carbohydrate biosynthesis; 3-deoxy-D-manno-octulosonate biosynthesis; 3-deoxy-D-manno-octulosonate from D-ribulose 5-phosphate: step 2/3. It functions in the pathway bacterial outer membrane biogenesis; lipopolysaccharide biosynthesis. The sequence is that of 2-dehydro-3-deoxyphosphooctonate aldolase from Fusobacterium nucleatum subsp. nucleatum (strain ATCC 25586 / DSM 15643 / BCRC 10681 / CIP 101130 / JCM 8532 / KCTC 2640 / LMG 13131 / VPI 4355).